The primary structure comprises 144 residues: Putative pre-16S rRNA nuclease (144 aa).

It belongs to the YqgF nuclease family.

It localises to the cytoplasm. Could be a nuclease involved in processing of the 5'-end of pre-16S rRNA. In Mycoplasma mobile (strain ATCC 43663 / 163K / NCTC 11711) (Mesomycoplasma mobile), this protein is Putative pre-16S rRNA nuclease.